The primary structure comprises 214 residues: YINYKNMSHQHTLMLFNLLPVGSNISTWWNFGSMLLSCSMIQIMTGFFLAIHYTANINLAFSSIIHISRDVPYGWIMQNTHAIGASLFFICIYIHIARGLYYGSYLNKEVWLSGTTLLIILMATAFFGYVLPWGQMSFWAATVITNLLTAIPYLGTTLTTWLWGGFAINDPTLTRFFALHFILPFAIISMSSIHILLLHNEGSSNPLGTNSDID.

Helical transmembrane passes span 31-51, 75-96, 111-131, and 176-196; these read FGSM…FLAI, WIMQ…YIHI, WLSG…GYVL, and FFAL…IHIL. Heme b contacts are provided by His81 and His95. Residues His180 and His194 each coordinate heme b. His199 serves as a coordination point for a ubiquinone.

The protein belongs to the cytochrome b family. The cytochrome bc1 complex contains 3 respiratory subunits (MT-CYB, CYC1 and UQCRFS1), 2 core proteins (UQCRC1 and UQCRC2) and probably 6 low-molecular weight proteins. Requires heme b as cofactor.

It localises to the mitochondrion inner membrane. Its function is as follows. Component of the ubiquinol-cytochrome c reductase complex (complex III or cytochrome b-c1 complex) that is part of the mitochondrial respiratory chain. The b-c1 complex mediates electron transfer from ubiquinol to cytochrome c. Contributes to the generation of a proton gradient across the mitochondrial membrane that is then used for ATP synthesis. This is Cytochrome b (MT-CYB) from Trimeresurus stejnegeri (Chinese green tree viper).